The primary structure comprises 552 residues: CTP synthase (552 aa).

The interval 1 to 270 (MTKYVFVTGG…DRIICEELKL (270 aa)) is amidoligase domain. Residue serine 13 coordinates CTP. Serine 13 contributes to the UTP binding site. Residues 14–19 (SLGKGI) and aspartate 71 each bind ATP. Mg(2+) is bound by residues aspartate 71 and glutamate 144. CTP contacts are provided by residues 151 to 153 (DIE), 191 to 196 (KTKPTQ), and lysine 227. UTP contacts are provided by residues 191-196 (KTKPTQ) and lysine 227. The 253-residue stretch at 295-547 (TIGMVGKYVD…VEAAFANKQA (253 aa)) folds into the Glutamine amidotransferase type-1 domain. Glycine 356 is a binding site for L-glutamine. Cysteine 383 serves as the catalytic Nucleophile; for glutamine hydrolysis. Residues 384–387 (LGMQ), glutamate 407, and arginine 473 contribute to the L-glutamine site. Catalysis depends on residues histidine 520 and glutamate 522.

This sequence belongs to the CTP synthase family. In terms of assembly, homotetramer.

The enzyme catalyses UTP + L-glutamine + ATP + H2O = CTP + L-glutamate + ADP + phosphate + 2 H(+). It catalyses the reaction L-glutamine + H2O = L-glutamate + NH4(+). It carries out the reaction UTP + NH4(+) + ATP = CTP + ADP + phosphate + 2 H(+). It functions in the pathway pyrimidine metabolism; CTP biosynthesis via de novo pathway; CTP from UDP: step 2/2. Its activity is regulated as follows. Allosterically activated by GTP, when glutamine is the substrate; GTP has no effect on the reaction when ammonia is the substrate. The allosteric effector GTP functions by stabilizing the protein conformation that binds the tetrahedral intermediate(s) formed during glutamine hydrolysis. Inhibited by the product CTP, via allosteric rather than competitive inhibition. Catalyzes the ATP-dependent amination of UTP to CTP with either L-glutamine or ammonia as the source of nitrogen. Regulates intracellular CTP levels through interactions with the four ribonucleotide triphosphates. The sequence is that of CTP synthase from Burkholderia ambifaria (strain ATCC BAA-244 / DSM 16087 / CCUG 44356 / LMG 19182 / AMMD) (Burkholderia cepacia (strain AMMD)).